A 106-amino-acid polypeptide reads, in one-letter code: Large ribosomal subunit protein uL24 (106 aa).

This sequence belongs to the universal ribosomal protein uL24 family. Part of the 50S ribosomal subunit.

Functionally, one of two assembly initiator proteins, it binds directly to the 5'-end of the 23S rRNA, where it nucleates assembly of the 50S subunit. In terms of biological role, one of the proteins that surrounds the polypeptide exit tunnel on the outside of the subunit. The polypeptide is Large ribosomal subunit protein uL24 (Acinetobacter baylyi (strain ATCC 33305 / BD413 / ADP1)).